The following is an 849-amino-acid chain: Autoinducer 1 sensor kinase/phosphatase LuxN (849 aa).

7 helical membrane-spanning segments follow: residues I9–F29, V41–I61, S160–M180, I196–F216, F220–L242, Y251–I275, and W283–Y301. Residues S468–P683 enclose the Histidine kinase domain. H471 carries the post-translational modification Phosphohistidine; by autocatalysis. A Response regulatory domain is found at T722–L835. D771 bears the 4-aspartylphosphate mark.

Its subcellular location is the cell inner membrane. It catalyses the reaction ATP + protein L-histidine = ADP + protein N-phospho-L-histidine.. With respect to regulation, the phosphatase activity is constitutive and the kinase activity is regulated by the presence or absence of AI-1. At low cell density the kinase activity overrides the phosphatase activity. Functionally, at low cell density, in the absence of AI-1 (autoinducer 1), LuxN has a kinase activity and autophosphorylates on His-471. The phosphoryl group is then transferred on Asp-771 of the response regulator domain. The phosphoryl group is transferred to LuxU, and ultimately to LuxO. At high cell density, in the presence of AI-1, the kinase activity is inactivated, and the response regulator domain has a phosphatase activity. LuxN phosphatase acts on itself. As LuxU could function to establish an equilibrium between the aspartyl-phosphate of LuxN and the aspartyl-phosphate of LuxO, LuxU transfers phosphate from LuxO to LuxN and finally phosphate is drained from the system. The chain is Autoinducer 1 sensor kinase/phosphatase LuxN (luxN) from Vibrio campbellii (strain ATCC BAA-1116).